The chain runs to 404 residues: Tryptophan synthase beta chain (404 aa).

Residue K98 is modified to N6-(pyridoxal phosphate)lysine.

The protein belongs to the TrpB family. Tetramer of two alpha and two beta chains. Pyridoxal 5'-phosphate is required as a cofactor.

The enzyme catalyses (1S,2R)-1-C-(indol-3-yl)glycerol 3-phosphate + L-serine = D-glyceraldehyde 3-phosphate + L-tryptophan + H2O. Its pathway is amino-acid biosynthesis; L-tryptophan biosynthesis; L-tryptophan from chorismate: step 5/5. In terms of biological role, the beta subunit is responsible for the synthesis of L-tryptophan from indole and L-serine. The protein is Tryptophan synthase beta chain of Rhodopseudomonas palustris (strain BisA53).